Reading from the N-terminus, the 100-residue chain is NADH-quinone oxidoreductase subunit K (100 aa).

Transmembrane regions (helical) follow at residues 4–24 (LSWY…GFVI), 29–49 (IVML…FASF), and 60–80 (IFVL…LAIV).

Belongs to the complex I subunit 4L family. In terms of assembly, NDH-1 is composed of 14 different subunits. Subunits NuoA, H, J, K, L, M, N constitute the membrane sector of the complex.

The protein resides in the cell inner membrane. It carries out the reaction a quinone + NADH + 5 H(+)(in) = a quinol + NAD(+) + 4 H(+)(out). Functionally, NDH-1 shuttles electrons from NADH, via FMN and iron-sulfur (Fe-S) centers, to quinones in the respiratory chain. The immediate electron acceptor for the enzyme in this species is believed to be ubiquinone. Couples the redox reaction to proton translocation (for every two electrons transferred, four hydrogen ions are translocated across the cytoplasmic membrane), and thus conserves the redox energy in a proton gradient. The protein is NADH-quinone oxidoreductase subunit K of Thermodesulfovibrio yellowstonii (strain ATCC 51303 / DSM 11347 / YP87).